Consider the following 161-residue polypeptide: Nucleotide-binding protein azo2183 (161 aa).

Belongs to the YajQ family.

Functionally, nucleotide-binding protein. In Azoarcus sp. (strain BH72), this protein is Nucleotide-binding protein azo2183.